The following is a 370-amino-acid chain: Immunoglobulin superfamily member 5 (370 aa).

An N-terminal signal peptide occupies residues 1 to 24 (MEGSWRDVLAVLVILAQLTASGSS). Ig-like V-type domains follow at residues 25-125 (YQII…LSVQ) and 128-215 (GTLN…KSLT). At 25–239 (YQIIEGPQNV…EEGPALPTWA (215 aa)) the chain is on the extracellular side. Residues asparagine 33 and asparagine 45 are each glycosylated (N-linked (GlcNAc...) asparagine). An intrachain disulfide couples cysteine 46 to cysteine 109. 3 N-linked (GlcNAc...) asparagine glycosylation sites follow: asparagine 146, asparagine 196, and asparagine 217. Cysteine 149 and cysteine 201 are disulfide-bonded. A helical transmembrane segment spans residues 240-260 (IILLAVAFSLLLILIIVLIII). Topologically, residues 261–370 (FCCCCASRRE…PQKVRNVTLV (110 aa)) are cytoplasmic. The interval 284–359 (ANMRTNKADP…THPRVSFDIA (76 aa)) is disordered. Positions 289-301 (NKADPETKLKGGK) are enriched in basic and acidic residues.

Belongs to the immunoglobulin superfamily. As to quaternary structure, interacts with MAGI1 at tight junctions, forms a tripartite complex with NPHS1. Interacts with LNX1 isoform 2 via its PDZ 2 domain, it may also interact with other isoforms containing this domain. N-glycosylated. In terms of tissue distribution, localized to kidney glomeruli and small intestinal epithelial cells. In kidney glomeruli, it is localized at slit diaphragm. Also found in spermatogonia, gonocytes, hematopoietic stem cells and Sertoli cells.

Its subcellular location is the apical cell membrane. The protein localises to the cell junction. It localises to the tight junction. Functionally, provides, together with MAGI1, an adhesion machinery at tight junctions, which may regulate the permeability of kidney glomerulus and small intestinal epithelial cells. Mediates calcium-independent homophilic cell adhesion. In testis, it may function as a cell adhesion molecule rather than a tight-junction protein. It may participate in the adhesion between spermatogonia-spermatogonia, spermatogonia-Sertoli cells, and Sertoli cells-Sertoli cells. In Mus musculus (Mouse), this protein is Immunoglobulin superfamily member 5 (Igsf5).